The following is a 74-amino-acid chain: Small ribosomal subunit protein bS18 (74 aa).

Belongs to the bacterial ribosomal protein bS18 family. Part of the 30S ribosomal subunit. Forms a tight heterodimer with protein bS6.

In terms of biological role, binds as a heterodimer with protein bS6 to the central domain of the 16S rRNA, where it helps stabilize the platform of the 30S subunit. This is Small ribosomal subunit protein bS18 from Alkalilimnicola ehrlichii (strain ATCC BAA-1101 / DSM 17681 / MLHE-1).